A 162-amino-acid polypeptide reads, in one-letter code: Heat shock protein beta-6 (162 aa).

The involved in stabilization of the HSPB1:HSBP6 heterodimer stretch occupies residues 1 to 72 (MEIPVPVQPS…PTAQVSTDSG (72 aa)). At S16 the chain carries Phosphoserine. Residues 56–162 (RAPSVALPTA…AQLPSPPAAK (107 aa)) enclose the sHSP domain. Q66 bears the Deamidated glutamine mark. Residue S157 is modified to Phosphoserine.

Belongs to the small heat shock protein (HSP20) family. As to quaternary structure, homodimer. Small heat shock proteins form high molecular mass oligomers containing variable number of monomers; these oligomers display a very flexible quaternary structure easily exchanging their subunits. Heterooligomer with HSPB1; formed through oligomerization of HSPB1:HSBP6 dimers; subunit exchange leads to formation of at least two different heterooligomeric complexes, differing in variable quantities of HSPB1 and HSPB6 homodimers in addition to HSPB1:HSPB6 heterodimers. Heterooligomer with CRYAB; large heterooligomers consist of CRYAB homodimers and HSPB5:HSPB6 heterodimers but lacking HSPB6 homodimers. Interacts with BAG3. Interacts (phosphorylated) with YWHAZ. Interacts with PDE4A and PDE4D; required for maintenance of the non-phosphorylated state of HSPB6 under basal conditions. Interacts with KDR. Interacts with PRKD1. Phosphorylated at Ser-16 by PKA and probably PKD1K; required to protect cardiomyocytes from apoptosis.

It is found in the cytoplasm. Its subcellular location is the nucleus. The protein localises to the secreted. Its function is as follows. Small heat shock protein which functions as a molecular chaperone probably maintaining denatured proteins in a folding-competent state. Seems to have versatile functions in various biological processes. Plays a role in regulating muscle function such as smooth muscle vasorelaxation and cardiac myocyte contractility. May regulate myocardial angiogenesis implicating KDR. Overexpression mediates cardioprotection and angiogenesis after induced damage. Stabilizes monomeric YWHAZ thereby supporting YWHAZ chaperone-like activity. The sequence is that of Heat shock protein beta-6 (Hspb6) from Mus musculus (Mouse).